A 277-amino-acid polypeptide reads, in one-letter code: Nuclear egress protein 2 (277 aa).

Topologically, residues 1–250 (MEVIPNINSR…ASGECVTTIR (250 aa)) are perinuclear space. The chain crosses the membrane as a helical span at residues 251–271 (IPRYIVMLWIFSVLLAMVTWG). Over 272–277 (SYRLYS) the chain is Nuclear.

The protein belongs to the herpesviridae NEC2 protein family. In terms of assembly, forms a heterohexameric complex with NEC1. In terms of processing, phosphorylated.

It is found in the host nucleus inner membrane. Functionally, plays an essential role in virion nuclear egress, the first step of virion release from infected cell. Within the host nucleus, NEC1 interacts with the newly formed capsid through the vertexes and directs it to the inner nuclear membrane by associating with NEC2. Induces the budding of the capsid at the inner nuclear membrane as well as its envelopment into the perinuclear space. There, the NEC1/NEC2 complex promotes the fusion of the enveloped capsid with the outer nuclear membrane and the subsequent release of the viral capsid into the cytoplasm where it will reach the secondary budding sites in the host Golgi or trans-Golgi network. This Gallid herpesvirus 2 (strain Chicken/Md5/ATCC VR-987) (GaHV-2) protein is Nuclear egress protein 2.